We begin with the raw amino-acid sequence, 229 residues long: Large ribosomal subunit protein uL1c (229 aa).

The protein belongs to the universal ribosomal protein uL1 family. Part of the 50S ribosomal subunit.

It localises to the plastid. The protein resides in the chloroplast. In terms of biological role, binds directly to 23S rRNA. Might be involved in E site tRNA release (Potential). This Pyropia yezoensis (Susabi-nori) protein is Large ribosomal subunit protein uL1c (rpl1).